The sequence spans 180 residues: Inner membrane-spanning protein YciB (180 aa).

Helical transmembrane passes span 4–24, 25–45, 52–72, 76–96, 118–138, and 150–170; these read LLSE…GGGI, QSAT…CYII, LSII…ISGD, IKIK…TSGI, ITLS…NEIV, and FKVF…LPLL.

The protein belongs to the YciB family.

The protein localises to the cell inner membrane. Its function is as follows. Plays a role in cell envelope biogenesis, maintenance of cell envelope integrity and membrane homeostasis. This is Inner membrane-spanning protein YciB from Rickettsia bellii (strain RML369-C).